A 209-amino-acid polypeptide reads, in one-letter code: Holliday junction branch migration complex subunit RuvA (209 aa).

The interval 1–70 is domain I; that stretch reads MFSYLKGEAI…EDGTYLYGFA (70 aa). Residues 71 to 149 form a domain II region; the sequence is SAAARDLFRQ…QWRDQFSLPD (79 aa). Residues 149-153 form a flexible linker region; that stretch reads DTAAQ. Residues 154-209 are domain III; the sequence is PNAAVHEDLELTLLALGYQETEIRGAIATLSQDSILLQNDNADEWIRRAITLLSQT.

The protein belongs to the RuvA family. In terms of assembly, homotetramer. Forms an RuvA(8)-RuvB(12)-Holliday junction (HJ) complex. HJ DNA is sandwiched between 2 RuvA tetramers; dsDNA enters through RuvA and exits via RuvB. An RuvB hexamer assembles on each DNA strand where it exits the tetramer. Each RuvB hexamer is contacted by two RuvA subunits (via domain III) on 2 adjacent RuvB subunits; this complex drives branch migration. In the full resolvosome a probable DNA-RuvA(4)-RuvB(12)-RuvC(2) complex forms which resolves the HJ.

Its subcellular location is the cytoplasm. Its function is as follows. The RuvA-RuvB-RuvC complex processes Holliday junction (HJ) DNA during genetic recombination and DNA repair, while the RuvA-RuvB complex plays an important role in the rescue of blocked DNA replication forks via replication fork reversal (RFR). RuvA specifically binds to HJ cruciform DNA, conferring on it an open structure. The RuvB hexamer acts as an ATP-dependent pump, pulling dsDNA into and through the RuvAB complex. HJ branch migration allows RuvC to scan DNA until it finds its consensus sequence, where it cleaves and resolves the cruciform DNA. In Picosynechococcus sp. (strain ATCC 27264 / PCC 7002 / PR-6) (Agmenellum quadruplicatum), this protein is Holliday junction branch migration complex subunit RuvA.